The sequence spans 422 residues: MSNNEFLNKLGEQAKKASYALASLTGQQKTALLRCIASKLTDAKANIIAANQQDVEQAKANGLSEAMIDRLLLDEPRLLSVIADIDNVIGLTDPVGSEIDSRLLDNGLRLSRRRVPLGVIGVIYEARPNVTVDIAVLALKTGNAVILRGGKETLASNKALCKVIRSAMAEQGLPEDCVQLIDNPDRSLVSGLLKLDKYVDMIVPRGGQNLQRLCAEQATIPVILGGIGICHLFVDVQADLDKAVAVIENAKVQRPTVCNALDTVLVHQTNAASFIPALCQQLATKGVSFYGCAQTQAVMANNEQQIMQATDESYSTEWLSLTLGIKVVGSLEEAVAHIRQYSSGHSESILTDNIHTASEFMNAVDSAAVYVNASTRFTDGGEFGLGAEVAVSTQKLHARGPMGLEALTTYKWLAWGDYTVRG.

This sequence belongs to the gamma-glutamyl phosphate reductase family.

It is found in the cytoplasm. The catalysed reaction is L-glutamate 5-semialdehyde + phosphate + NADP(+) = L-glutamyl 5-phosphate + NADPH + H(+). The protein operates within amino-acid biosynthesis; L-proline biosynthesis; L-glutamate 5-semialdehyde from L-glutamate: step 2/2. Functionally, catalyzes the NADPH-dependent reduction of L-glutamate 5-phosphate into L-glutamate 5-semialdehyde and phosphate. The product spontaneously undergoes cyclization to form 1-pyrroline-5-carboxylate. The polypeptide is Gamma-glutamyl phosphate reductase (Shewanella piezotolerans (strain WP3 / JCM 13877)).